A 146-amino-acid polypeptide reads, in one-letter code: Large ribosomal subunit protein uL11 (146 aa).

The protein belongs to the universal ribosomal protein uL11 family. Part of the ribosomal stalk of the 50S ribosomal subunit. Interacts with L10 and the large rRNA to form the base of the stalk. L10 forms an elongated spine to which L12 dimers bind in a sequential fashion forming a multimeric L10(L12)X complex. One or more lysine residues are methylated.

Forms part of the ribosomal stalk which helps the ribosome interact with GTP-bound translation factors. The sequence is that of Large ribosomal subunit protein uL11 from Treponema pallidum subsp. pallidum (strain SS14).